Consider the following 592-residue polypeptide: Putative RING finger protein ORF9 (592 aa).

The RING-type zinc finger occupies 12-49 (CCICLEEDIERVDTIPCQHTVCRPCYLKPMINKCPVCR). A coiled-coil region spans residues 414 to 441 (WELIKREELLQRRYKREEQNLKYTSNRL).

This Ostreid herpesvirus 1 (isolate France) (OsHV-1) protein is Putative RING finger protein ORF9.